The primary structure comprises 381 residues: Alkanesulfonate monooxygenase (381 aa).

Belongs to the SsuD family. As to quaternary structure, homotetramer.

The catalysed reaction is an alkanesulfonate + FMNH2 + O2 = an aldehyde + FMN + sulfite + H2O + 2 H(+). In terms of biological role, catalyzes the desulfonation of aliphatic sulfonates. In Escherichia coli O81 (strain ED1a), this protein is Alkanesulfonate monooxygenase.